Consider the following 297-residue polypeptide: Bifunctional protein FolD (297 aa).

NADP(+)-binding positions include 166 to 168 (GRS), Ser191, and Ile232.

The protein belongs to the tetrahydrofolate dehydrogenase/cyclohydrolase family. As to quaternary structure, homodimer.

It carries out the reaction (6R)-5,10-methylene-5,6,7,8-tetrahydrofolate + NADP(+) = (6R)-5,10-methenyltetrahydrofolate + NADPH. The enzyme catalyses (6R)-5,10-methenyltetrahydrofolate + H2O = (6R)-10-formyltetrahydrofolate + H(+). It participates in one-carbon metabolism; tetrahydrofolate interconversion. Catalyzes the oxidation of 5,10-methylenetetrahydrofolate to 5,10-methenyltetrahydrofolate and then the hydrolysis of 5,10-methenyltetrahydrofolate to 10-formyltetrahydrofolate. The chain is Bifunctional protein FolD from Phenylobacterium zucineum (strain HLK1).